The sequence spans 359 residues: 3-dehydroquinate synthase (359 aa).

NAD(+) contacts are provided by residues 106–110, 130–131, lysine 143, lysine 152, and 170–173; these read GVVGD, TT, and TLQT. Zn(2+) is bound by residues glutamate 185, histidine 248, and histidine 265.

This sequence belongs to the sugar phosphate cyclases superfamily. Dehydroquinate synthase family. The cofactor is Co(2+). Zn(2+) serves as cofactor. Requires NAD(+) as cofactor.

It is found in the cytoplasm. The catalysed reaction is 7-phospho-2-dehydro-3-deoxy-D-arabino-heptonate = 3-dehydroquinate + phosphate. It participates in metabolic intermediate biosynthesis; chorismate biosynthesis; chorismate from D-erythrose 4-phosphate and phosphoenolpyruvate: step 2/7. In terms of biological role, catalyzes the conversion of 3-deoxy-D-arabino-heptulosonate 7-phosphate (DAHP) to dehydroquinate (DHQ). This is 3-dehydroquinate synthase from Desulforamulus reducens (strain ATCC BAA-1160 / DSM 100696 / MI-1) (Desulfotomaculum reducens).